A 176-amino-acid polypeptide reads, in one-letter code: Ribosome rescue factor SmrB (176 aa).

Residues 93-168 (LDLHGYRQSE…GDAALLVLID (76 aa)) form the Smr domain.

Belongs to the SmrB family. As to quaternary structure, associates with collided ribosomes, but not with correctly translating polysomes.

Functionally, acts as a ribosome collision sensor. Detects stalled/collided disomes (pairs of ribosomes where the leading ribosome is stalled and a second ribosome has collided with it) and endonucleolytically cleaves mRNA at the 5' boundary of the stalled ribosome. Stalled/collided disomes form a new interface (primarily via the 30S subunits) that binds SmrB. Cleaved mRNA becomes available for tmRNA ligation, leading to ribosomal subunit dissociation and rescue of stalled ribosomes. The chain is Ribosome rescue factor SmrB from Shewanella baltica (strain OS223).